A 98-amino-acid polypeptide reads, in one-letter code: Large ribosomal subunit protein uL23 (98 aa).

It belongs to the universal ribosomal protein uL23 family. As to quaternary structure, part of the 50S ribosomal subunit. Contacts protein L29, and trigger factor when it is bound to the ribosome.

One of the early assembly proteins it binds 23S rRNA. One of the proteins that surrounds the polypeptide exit tunnel on the outside of the ribosome. Forms the main docking site for trigger factor binding to the ribosome. In Lactobacillus johnsonii (strain CNCM I-12250 / La1 / NCC 533), this protein is Large ribosomal subunit protein uL23.